A 36-amino-acid chain; its full sequence is Kappa-theraphotoxin-Pg1b (36 aa).

3 disulfides stabilise this stretch: C4-C19, C11-C24, and C18-C31.

It belongs to the neurotoxin 10 (Hwtx-1) family. 44 (Jztx-4) subfamily. As to expression, expressed by the venom gland.

It is found in the secreted. Gating modifier of Kv2.1/KCNB1, Kv2.2/KCNB2 and Kv4.3/KCND3 channels. The protein is Kappa-theraphotoxin-Pg1b of Chilobrachys guangxiensis (Chinese earth tiger tarantula).